We begin with the raw amino-acid sequence, 644 residues long: Threonine--tRNA ligase (644 aa).

In terms of domain architecture, TGS spans 1–61 (MPDIQLPDGS…DQDAEVAIVT (61 aa)). The segment at 242–535 (DHRRIGTELE…LIEHYEGKFP (294 aa)) is catalytic. Zn(2+) contacts are provided by Cys-335, His-386, and His-512.

The protein belongs to the class-II aminoacyl-tRNA synthetase family. In terms of assembly, homodimer. Zn(2+) serves as cofactor.

Its subcellular location is the cytoplasm. The enzyme catalyses tRNA(Thr) + L-threonine + ATP = L-threonyl-tRNA(Thr) + AMP + diphosphate + H(+). In terms of biological role, catalyzes the attachment of threonine to tRNA(Thr) in a two-step reaction: L-threonine is first activated by ATP to form Thr-AMP and then transferred to the acceptor end of tRNA(Thr). Also edits incorrectly charged L-seryl-tRNA(Thr). This is Threonine--tRNA ligase from Acidithiobacillus ferrooxidans (strain ATCC 23270 / DSM 14882 / CIP 104768 / NCIMB 8455) (Ferrobacillus ferrooxidans (strain ATCC 23270)).